Consider the following 318-residue polypeptide: Olfactory receptor 13C9 (318 aa).

Topologically, residues 1–25 (MEWENQTILVEFFLKGHSVHPRLEL) are extracellular. Asparagine 5 carries N-linked (GlcNAc...) asparagine glycosylation. Residues 26–46 (LFFVLIFIMYVVILLGNGTLI) traverse the membrane as a helical segment. Residues 47-54 (LISILDPH) are Cytoplasmic-facing. The helical transmembrane segment at 55 to 75 (LHTPMYFFLGNLSFLDICYTT) threads the bilayer. Over 76–99 (TSIPSTLVSFLSERKTISFSGCAV) the chain is Extracellular. A disulfide bridge links cysteine 97 with cysteine 189. The helical transmembrane segment at 100 to 120 (QMFLGLAMGTTECVLLGMMAF) threads the bilayer. At 121–139 (DRYVAICNPLRYPIIMSKN) the chain is on the cytoplasmic side. The chain crosses the membrane as a helical span at residues 140–160 (AYVPMAVGSWFAGIVNSAVQT). The Extracellular segment spans residues 161–197 (TFVVQLPFCRKNVINHFSCEILAVMKLACADISGNEF). Residues 198–217 (LMLVATILFTLMPLLLIVIS) form a helical membrane-spanning segment. The Cytoplasmic portion of the chain corresponds to 218–237 (YSLIISSILKIHSSEGRSKA). A helical membrane pass occupies residues 238–258 (FSTCSAHLTVVIIFYGTILFM). The Extracellular segment spans residues 259–277 (YMKPKSKETLNSDDLDATD). A helical transmembrane segment spans residues 278–298 (KIISMFYGVMTPMMNPLIYSL). Residues 299–318 (RNKDVKEAVKHLPNRRFFSK) are Cytoplasmic-facing.

Belongs to the G-protein coupled receptor 1 family.

The protein localises to the cell membrane. Functionally, odorant receptor. The protein is Olfactory receptor 13C9 (OR13C9) of Homo sapiens (Human).